The primary structure comprises 664 residues: DNA mismatch repair protein MutL (664 aa).

Belongs to the DNA mismatch repair MutL/HexB family.

This protein is involved in the repair of mismatches in DNA. It is required for dam-dependent methyl-directed DNA mismatch repair. May act as a 'molecular matchmaker', a protein that promotes the formation of a stable complex between two or more DNA-binding proteins in an ATP-dependent manner without itself being part of a final effector complex. This Clostridium beijerinckii (strain ATCC 51743 / NCIMB 8052) (Clostridium acetobutylicum) protein is DNA mismatch repair protein MutL.